Reading from the N-terminus, the 285-residue chain is Bifunctional protein FolD (285 aa).

NADP(+) contacts are provided by residues 165 to 167 and Ser-190; that span reads GRS.

The protein belongs to the tetrahydrofolate dehydrogenase/cyclohydrolase family. In terms of assembly, homodimer.

The catalysed reaction is (6R)-5,10-methylene-5,6,7,8-tetrahydrofolate + NADP(+) = (6R)-5,10-methenyltetrahydrofolate + NADPH. The enzyme catalyses (6R)-5,10-methenyltetrahydrofolate + H2O = (6R)-10-formyltetrahydrofolate + H(+). The protein operates within one-carbon metabolism; tetrahydrofolate interconversion. Functionally, catalyzes the oxidation of 5,10-methylenetetrahydrofolate to 5,10-methenyltetrahydrofolate and then the hydrolysis of 5,10-methenyltetrahydrofolate to 10-formyltetrahydrofolate. The protein is Bifunctional protein FolD of Burkholderia multivorans (strain ATCC 17616 / 249).